The chain runs to 131 residues: Profilin-1 (131 aa).

Belongs to the profilin family. As to quaternary structure, occurs in many kinds of cells as a complex with monomeric actin in a 1:1 ratio.

The protein resides in the cytoplasm. The protein localises to the cytoskeleton. Functionally, binds to actin and affects the structure of the cytoskeleton. At high concentrations, profilin prevents the polymerization of actin, whereas it enhances it at low concentrations. By binding to PIP2, it inhibits the formation of IP3 and DG. The polypeptide is Profilin-1 (Hevea brasiliensis (Para rubber tree)).